Consider the following 337-residue polypeptide: tRNA N6-adenosine threonylcarbamoyltransferase (337 aa).

Residues His111 and His115 each contribute to the Fe cation site. Substrate is bound by residues Leu134 to Gly138, Asp167, Gly180, and Asn272. Asp300 provides a ligand contact to Fe cation.

The protein belongs to the KAE1 / TsaD family. The cofactor is Fe(2+).

Its subcellular location is the cytoplasm. The enzyme catalyses L-threonylcarbamoyladenylate + adenosine(37) in tRNA = N(6)-L-threonylcarbamoyladenosine(37) in tRNA + AMP + H(+). Required for the formation of a threonylcarbamoyl group on adenosine at position 37 (t(6)A37) in tRNAs that read codons beginning with adenine. Is involved in the transfer of the threonylcarbamoyl moiety of threonylcarbamoyl-AMP (TC-AMP) to the N6 group of A37, together with TsaE and TsaB. TsaD likely plays a direct catalytic role in this reaction. The protein is tRNA N6-adenosine threonylcarbamoyltransferase of Escherichia coli (strain K12 / MC4100 / BW2952).